A 432-amino-acid polypeptide reads, in one-letter code: Adenylosuccinate synthetase (432 aa).

GTP-binding positions include 13-19 (GDEGKGK) and 41-43 (GHT). D14 acts as the Proton acceptor in catalysis. D14 and G41 together coordinate Mg(2+). Residues 14-17 (DEGK), 39-42 (NAGH), T130, R144, Q225, T240, and R304 each bind IMP. The active-site Proton donor is H42. 300 to 306 (ATTGRKR) lines the substrate pocket. GTP-binding positions include R306, 332 to 334 (KLD), and 415 to 417 (STG).

It belongs to the adenylosuccinate synthetase family. As to quaternary structure, homodimer. Mg(2+) is required as a cofactor.

It localises to the cytoplasm. The enzyme catalyses IMP + L-aspartate + GTP = N(6)-(1,2-dicarboxyethyl)-AMP + GDP + phosphate + 2 H(+). It participates in purine metabolism; AMP biosynthesis via de novo pathway; AMP from IMP: step 1/2. Its function is as follows. Plays an important role in the de novo pathway of purine nucleotide biosynthesis. Catalyzes the first committed step in the biosynthesis of AMP from IMP. This is Adenylosuccinate synthetase from Tolumonas auensis (strain DSM 9187 / NBRC 110442 / TA 4).